The chain runs to 175 residues: ATP synthase subunit b (175 aa).

A helical membrane pass occupies residues 20–40 (LIFWTAITFVIVLLILKKIAW).

It belongs to the ATPase B chain family. As to quaternary structure, F-type ATPases have 2 components, F(1) - the catalytic core - and F(0) - the membrane proton channel. F(1) has five subunits: alpha(3), beta(3), gamma(1), delta(1), epsilon(1). F(0) has four main subunits: a(1), b(2) and c(10-14). The alpha and beta chains form an alternating ring which encloses part of the gamma chain. F(1) is attached to F(0) by a central stalk formed by the gamma and epsilon chains, while a peripheral stalk is formed by the delta and b chains.

It is found in the cell inner membrane. In terms of biological role, f(1)F(0) ATP synthase produces ATP from ADP in the presence of a proton or sodium gradient. F-type ATPases consist of two structural domains, F(1) containing the extramembraneous catalytic core and F(0) containing the membrane proton channel, linked together by a central stalk and a peripheral stalk. During catalysis, ATP synthesis in the catalytic domain of F(1) is coupled via a rotary mechanism of the central stalk subunits to proton translocation. Functionally, component of the F(0) channel, it forms part of the peripheral stalk, linking F(1) to F(0). This is ATP synthase subunit b from Pelodictyon phaeoclathratiforme (strain DSM 5477 / BU-1).